The chain runs to 55 residues: Histone H1 (55 aa).

Residues 1-15 are compositionally biased toward low complexity; the sequence is MAEVAPAPAAAAPAK. Positions 1–28 are disordered; sequence MAEVAPAPAAAAPAKAPKKKAAAKPKKA. N-acetylalanine is present on A2. The span at 16-27 shows a compositional bias: basic residues; that stretch reads APKKKAAAKPKK. Residues 28 to 55 form the H15 domain; it reads AGPSVGELIVKAVSASKERSGVSLAALK.

The protein belongs to the histone H1/H5 family.

The protein localises to the nucleus. The protein resides in the chromosome. It localises to the secreted. Its function is as follows. Histones H1 are necessary for the condensation of nucleosome chains into higher-order structures. Functionally, SAMP H1 has antibacterial activity against Gram-negative bacteria E.coli, A.salmonicida subsp salmonicida, V.anguillarum and S.typhimurium and Gram-positive bacteria B.subtilis and L.ivanovii. This is Histone H1 from Salmo salar (Atlantic salmon).